We begin with the raw amino-acid sequence, 1405 residues long: DNA-directed RNA polymerase subunit beta' (1405 aa).

Zn(2+)-binding residues include Cys-70, Cys-72, Cys-85, and Cys-88. 3 residues coordinate Mg(2+): Asp-460, Asp-462, and Asp-464. The Zn(2+) site is built by Cys-814, Cys-888, Cys-895, and Cys-898.

The protein belongs to the RNA polymerase beta' chain family. As to quaternary structure, the RNAP catalytic core consists of 2 alpha, 1 beta, 1 beta' and 1 omega subunit. When a sigma factor is associated with the core the holoenzyme is formed, which can initiate transcription. Requires Mg(2+) as cofactor. Zn(2+) serves as cofactor.

It catalyses the reaction RNA(n) + a ribonucleoside 5'-triphosphate = RNA(n+1) + diphosphate. In terms of biological role, DNA-dependent RNA polymerase catalyzes the transcription of DNA into RNA using the four ribonucleoside triphosphates as substrates. The sequence is that of DNA-directed RNA polymerase subunit beta' from Shewanella sediminis (strain HAW-EB3).